The sequence spans 283 residues: Nucleotide-binding protein IL0393 (283 aa).

8-15 (GRSGSGKT) contacts ATP. 56–59 (DVRN) is a binding site for GTP.

This sequence belongs to the RapZ-like family.

Its function is as follows. Displays ATPase and GTPase activities. This chain is Nucleotide-binding protein IL0393, found in Idiomarina loihiensis (strain ATCC BAA-735 / DSM 15497 / L2-TR).